We begin with the raw amino-acid sequence, 336 residues long: Cyclin-H1-1 (336 aa).

Alanine 2 carries the N-acetylalanine modification. The interval 297-336 is disordered; sequence KSCLGHSSSHDESKKREKRSKHKSHRSSNDTPNGAPPPIG. The span at 312 to 322 shows a compositional bias: basic residues; that stretch reads REKRSKHKSHR.

It belongs to the cyclin family. As to quaternary structure, interacts with CDKA-1, CDKD-2 and CDKD-3, but not CDKD-1 and CDKF-1.

Its subcellular location is the cytoplasm. The protein localises to the nucleus. Functionally, associates with CDK-2 and CDK-3 and activates the CDK kinases. This is Cyclin-H1-1 (CYCH1-1) from Arabidopsis thaliana (Mouse-ear cress).